The following is a 288-amino-acid chain: MSSSVLVLTSPGFASKEESLKKVFDLIDNGASRELQMIDRVQSQLVNLPINRYDSVIAAIDDGAWSSTLGPILSQAFASVHPGGTLRVYSTADEADESFEMTALLSGWLIESKSPWILSRPNQVEAVPIKLSNKNGQSASKNKILDFLKSDKENLISGDDDQELIDEDELLDESAHDNVLKVPECKPEPGKKKRACKNCTCGLREMEEHESSKTSAQLEAVKLTDTTEVDFTEKLKSKNAVSSCGNCYLGDAFRCSGCPYIGMPAFNPGDTVILAENRDKMSWMADDI.

The segment at 1 to 127 (MSSSVLVLTS…LSRPNQVEAV (127 aa)) is N-terminal SAM-like domain. The segment at 128 to 177 (PIKLSNKNGQSASKNKILDFLKSDKENLISGDDDQELIDEDELLDESAHD) is linker. Positions 185, 196, 199, and 201 each coordinate [2Fe-2S] cluster. Residues 185–201 (CKPEPGKKKRACKNCTC) form a fe-S binding site A region. [4Fe-4S] cluster contacts are provided by cysteine 244, cysteine 247, cysteine 255, and cysteine 258. Short sequence motifs (cx2C motif) lie at residues 244 to 247 (CGNC) and 255 to 258 (CSGC). Residues 244–258 (CGNCYLGDAFRCSGC) are fe-S binding site B.

It belongs to the anamorsin family. Monomer. Interacts with tah18. Interacts with tim40. Requires [2Fe-2S] cluster as cofactor. It depends on [4Fe-4S] cluster as a cofactor.

It is found in the cytoplasm. It localises to the mitochondrion intermembrane space. In terms of biological role, component of the cytosolic iron-sulfur (Fe-S) protein assembly (CIA) machinery required for the maturation of extramitochondrial Fe-S proteins. Part of an electron transfer chain functioning in an early step of cytosolic Fe-S biogenesis, facilitating the de novo assembly of a [4Fe-4S] cluster on the scaffold complex cfd1-nbp35. Electrons are transferred to dre2 from NADPH via the FAD- and FMN-containing protein tah18. Tah18-dre2 are also required for the assembly of the diferric tyrosyl radical cofactor of ribonucleotide reductase (RNR), probably by providing electrons for reduction during radical cofactor maturation in the catalytic small subunit suc22. The chain is Fe-S cluster assembly protein dre2 from Schizosaccharomyces pombe (strain 972 / ATCC 24843) (Fission yeast).